Here is a 166-residue protein sequence, read N- to C-terminus: Peptide methionine sulfoxide reductase MsrA (166 aa).

The active site involves Cys11.

This sequence belongs to the MsrA Met sulfoxide reductase family.

The enzyme catalyses L-methionyl-[protein] + [thioredoxin]-disulfide + H2O = L-methionyl-(S)-S-oxide-[protein] + [thioredoxin]-dithiol. It carries out the reaction [thioredoxin]-disulfide + L-methionine + H2O = L-methionine (S)-S-oxide + [thioredoxin]-dithiol. In terms of biological role, has an important function as a repair enzyme for proteins that have been inactivated by oxidation. Catalyzes the reversible oxidation-reduction of methionine sulfoxide in proteins to methionine. The polypeptide is Peptide methionine sulfoxide reductase MsrA (Lachnoclostridium phytofermentans (strain ATCC 700394 / DSM 18823 / ISDg) (Clostridium phytofermentans)).